A 410-amino-acid polypeptide reads, in one-letter code: Phosphoglycerate kinase (410 aa).

Substrate-binding positions include 19–21 (DLN), Arg34, 57–60 (HQGK), Arg114, and Arg154. Residues Glu332 and 358 to 361 (GGHS) contribute to the ATP site.

The protein belongs to the phosphoglycerate kinase family. Homodimer.

It localises to the cytoplasm. It carries out the reaction (2R)-3-phosphoglycerate + ATP = (2R)-3-phospho-glyceroyl phosphate + ADP. It functions in the pathway carbohydrate degradation; glycolysis; pyruvate from D-glyceraldehyde 3-phosphate: step 2/5. The polypeptide is Phosphoglycerate kinase (pgk) (Pyrococcus furiosus (strain ATCC 43587 / DSM 3638 / JCM 8422 / Vc1)).